A 287-amino-acid polypeptide reads, in one-letter code: Inhibitory synaptic factor 1 (287 aa).

Positions 1 to 22 are disordered; the sequence is MSQSRAPAREPSETPSQREQIR. The stretch at 25–58 forms a coiled coil; sequence MKMVIQQLEGILKELKDVAHELREVVGQIDKLTS. Disordered regions lie at residues 113-174 and 189-287; these read RRSA…GTRE and CDDD…NKDL. Over residues 153–167 the composition is skewed to low complexity; that stretch reads EEASSSTHSQSQKTS. Over residues 189-209 the composition is skewed to acidic residues; sequence CDDDEDEDEDEDGRDEEEDKL. The span at 259-274 shows a compositional bias: polar residues; it reads RNSSTQTVSDKSTQTL.

It belongs to the INSYN1 family.

The protein resides in the postsynaptic density. Its function is as follows. May be a component of the protein machinery at the inhibitory synapses, probably acting as a scaffold. The polypeptide is Inhibitory synaptic factor 1 (Danio rerio (Zebrafish)).